Consider the following 35-residue polypeptide: Probable endonuclease 4 (35 aa).

Glu-15 serves as a coordination point for Zn(2+).

It belongs to the AP endonuclease 2 family. Zn(2+) serves as cofactor.

It carries out the reaction Endonucleolytic cleavage to 5'-phosphooligonucleotide end-products.. Its function is as follows. Endonuclease IV plays a role in DNA repair. It cleaves phosphodiester bonds at apurinic or apyrimidinic (AP) sites, generating a 3'-hydroxyl group and a 5'-terminal sugar phosphate. The polypeptide is Probable endonuclease 4 (nfo) (Yersinia enterocolitica).